The following is a 366-amino-acid chain: Zinc finger CCCH domain-containing protein 11 (366 aa).

Residues 43 to 66 form a disordered region; it reads LHQAVQPKPDPTKTAAKKKKEEEK. Positions 54–79 form a coiled coil; that stretch reads TKTAAKKKKEEEKAREKELNDLFKVA. C3H1-type zinc fingers lie at residues 90 to 117 and 160 to 198; these read DPKS…HDLN and KPTD…HALP. The stretch at 208–234 forms a coiled coil; it reads KALLEEESEKIAIEDEIEDQRKKVKTT. A disordered region spans residues 293-338; that stretch reads YERQEESEANEEPSNKNQDEGPSSSTSNGKEVEESDDEDINIDDDL. Residues 312–321 show a composition bias toward polar residues; the sequence is EGPSSSTSNG. Acidic residues predominate over residues 325-338; that stretch reads EESDDEDINIDDDL.

This is Zinc finger CCCH domain-containing protein 11 from Oryza sativa subsp. japonica (Rice).